The following is a 103-amino-acid chain: MYAVFQSGGKQHRVTEGETVRLEKLSNVTGEKINFNQVLMISDGETIKVGAPLINGGLVQAEVMAHGRADKIKIIKFRRRKHYRKQQGHRQWFTDVKIIGIIS.

It belongs to the bacterial ribosomal protein bL21 family. As to quaternary structure, part of the 50S ribosomal subunit. Contacts protein L20.

This protein binds to 23S rRNA in the presence of protein L20. In Hamiltonella defensa subsp. Acyrthosiphon pisum (strain 5AT), this protein is Large ribosomal subunit protein bL21.